The following is a 139-amino-acid chain: Ubiquitin-conjugating enzyme spm2 (139 aa).

In terms of domain architecture, UBC core spans 5–139 (PRNFKLLEEL…PQPPEGSTFF (135 aa)).

It belongs to the ubiquitin-conjugating enzyme family. Heterodimer with ubc13.

Its function is as follows. Has a role in the DNA error-free postreplication repair (PRR) pathway. Lacks catalytic activity by itself. The ubc13/spm2 heterodimer catalyzes the synthesis of non-canonical poly-ubiquitin chains that are linked through 'Lys-63'. The chain is Ubiquitin-conjugating enzyme spm2 (spm2) from Schizosaccharomyces pombe (strain 972 / ATCC 24843) (Fission yeast).